The primary structure comprises 159 residues: UPF0262 protein Dshi_0980 (159 aa).

This sequence belongs to the UPF0262 family.

The polypeptide is UPF0262 protein Dshi_0980 (Dinoroseobacter shibae (strain DSM 16493 / NCIMB 14021 / DFL 12)).